We begin with the raw amino-acid sequence, 119 residues long: Ribonuclease P protein component (119 aa).

It belongs to the RnpA family. In terms of assembly, consists of a catalytic RNA component (M1 or rnpB) and a protein subunit.

The enzyme catalyses Endonucleolytic cleavage of RNA, removing 5'-extranucleotides from tRNA precursor.. In terms of biological role, RNaseP catalyzes the removal of the 5'-leader sequence from pre-tRNA to produce the mature 5'-terminus. It can also cleave other RNA substrates such as 4.5S RNA. The protein component plays an auxiliary but essential role in vivo by binding to the 5'-leader sequence and broadening the substrate specificity of the ribozyme. In Proteus mirabilis (strain HI4320), this protein is Ribonuclease P protein component.